The following is a 463-amino-acid chain: UDP-glucosyltransferase A1 (463 aa).

This sequence belongs to the UDP-glycosyltransferase family.

The catalysed reaction is 18-hydroxy-(9Z)-octadecenoate + UDP-alpha-D-glucose = (9Z)-18-hydroxyoctadec-9-enoate 18-O-beta-D-glucoside + UDP + H(+). It catalyses the reaction 17-hydroxy-(9Z)-octadecenoate + UDP-alpha-D-glucose = (9Z)-17-hydroxyoctadec-9-enoate 17-O-beta-D-glucoside + UDP + H(+). Functionally, catalyzes the first glycosylation step of sophorolipid biosynthesis, the coupling of glucose to a hydroxylated fatty acid to give rise to a glucolipid. Can glycosylate all hydroxyl fatty acids generated by cytochrome P450 monooxygenases CYP52M1, CYP52N1 and CYP52E3 into their corresponding glucolipids. Main products are 17-O- and 18-O-(beta-D-glucopyranosyl)-octadecenoic acids. The sequence is that of UDP-glucosyltransferase A1 from Starmerella bombicola (Yeast).